The primary structure comprises 65 residues: Small ribosomal subunit protein eS27 (65 aa).

Zn(2+) is bound by residues cysteine 20, cysteine 23, cysteine 39, and cysteine 42. The C4-type zinc finger occupies 20 to 42 (CIDCGNEQIVFSHPATRVRCLVC).

This sequence belongs to the eukaryotic ribosomal protein eS27 family. Part of the 30S ribosomal subunit. It depends on Zn(2+) as a cofactor.

This Pyrococcus horikoshii (strain ATCC 700860 / DSM 12428 / JCM 9974 / NBRC 100139 / OT-3) protein is Small ribosomal subunit protein eS27.